Consider the following 1158-residue polypeptide: Protein transport protein Sec31B (1158 aa).

7 WD repeats span residues 4–47 (KELE…EIFE), 65–110 (VSSR…SSGK), 119–159 (KHTG…VPMT), 166–206 (NPPE…PIIK), 209–254 (SHSS…SPLK), 258–298 (SHSR…VVYK), and 301–341 (TQSS…WEAQ). Residues 376 to 407 (SFAFGGKLVTFGLPSIPVQPVAQACSRPVFIS) form a WD 8; interaction with SEC13 repeat. Disordered stretches follow at residues 485-520 (LKSD…HTAK), 797-843 (TSSY…SSDH), and 968-1010 (GPQD…PEPQ). The segment covering 822–840 (QPSSVMPFSPSQPSPSQGS) has biased composition (low complexity).

It belongs to the WD repeat SEC31 family. COPII is composed of at least 5 proteins: the SEC23/24 complex, the SEC13/31 complex and SAR1. SEC13 and SEC31 make a 2:2 tetramer that forms the edge element of the COPII outer coat. The tetramer self-assembles in multiple copies to form the complete polyhedral cage. Interacts (via WD 8) with SEC13. Interacts with SEC31A. Post-translationally, monoubiquitinated by the BCR(KLHL12) E3 ubiquitin ligase complex, leading to regulate the size of COPII coats.

Its subcellular location is the cytoplasm. The protein localises to the cytoplasmic vesicle. The protein resides in the COPII-coated vesicle membrane. It is found in the endoplasmic reticulum membrane. In terms of biological role, as a component of the coat protein complex II (COPII), may function in vesicle budding and cargo export from the endoplasmic reticulum. This Mus musculus (Mouse) protein is Protein transport protein Sec31B (Sec31b).